The chain runs to 96 residues: Methanol dehydrogenase [cytochrome c] subunit 2 (96 aa).

A signal peptide spans 1-22 (MKTTLIAAAIVALSGLAAPALA). Cysteines 28 and 34 form a disulfide. The segment at 45-75 (IAGSKYDPKHDPKELNKQADSIKQMEERNKK) is disordered. A compositionally biased stretch (basic and acidic residues) spans 50-61 (YDPKHDPKELNK).

Belongs to the methanol dehydrogenase subunit 2 family. In terms of assembly, heterotetramer composed of 2 alpha and 2 beta subunits.

Its subcellular location is the periplasm. It catalyses the reaction 2 Fe(III)-[cytochrome cL] + a primary alcohol = 2 Fe(II)-[cytochrome cL] + an aldehyde + 2 H(+). Functionally, catalyzes the oxidation of primary alcohols including methanol. This Methylorubrum extorquens (strain ATCC 14718 / DSM 1338 / JCM 2805 / NCIMB 9133 / AM1) (Methylobacterium extorquens) protein is Methanol dehydrogenase [cytochrome c] subunit 2 (moxI).